Reading from the N-terminus, the 123-residue chain is Ribonuclease P protein component (123 aa).

The protein belongs to the RnpA family. As to quaternary structure, consists of a catalytic RNA component (M1 or rnpB) and a protein subunit.

The catalysed reaction is Endonucleolytic cleavage of RNA, removing 5'-extranucleotides from tRNA precursor.. Functionally, RNaseP catalyzes the removal of the 5'-leader sequence from pre-tRNA to produce the mature 5'-terminus. It can also cleave other RNA substrates such as 4.5S RNA. The protein component plays an auxiliary but essential role in vivo by binding to the 5'-leader sequence and broadening the substrate specificity of the ribozyme. This Herpetosiphon aurantiacus (strain ATCC 23779 / DSM 785 / 114-95) protein is Ribonuclease P protein component.